The sequence spans 562 residues: Non-homologous end joining factor IFFO1 (562 aa).

Residues 65–116 (ALRNDLGSNINVLKTLNLRFRCFLAKVHELERRNRLLEKQLQQALEEGKQGR) are LMNA binding. The region spanning 73-529 (NINVLKTLNL…RLITQSGDRK (457 aa)) is the IF rod domain. The stretch at 85 to 117 (RCFLAKVHELERRNRLLEKQLQQALEEGKQGRR) forms a coiled coil. The segment at 154–187 (RVLGSPSRSPAGPLASSAACHTSSSTSTSTAFSS) is disordered. Residues 168–187 (ASSAACHTSSSTSTSTAFSS) show a composition bias toward low complexity. Residues 237 to 301 (EIRALYNVLA…MKVEQLKAEL (65 aa)) adopt a coiled-coil conformation. The segment at 364–401 (MGGRKRERKAAVEEDTSLSESDGPRQPEGAEEESTALS) is disordered. Positions 453–528 (EQEDSLEKVI…RRLITQSGDR (76 aa)) are XCCR4 binding. Required for localization to the double-strand breaks (DSBs). Positions 458–504 (LEKVIKDTESLFKTREKEYQETIDQIELELATAKNDMNRHLHEYMEM) form a coiled coil. The disordered stretch occupies residues 523 to 562 (TQSGDRKSPAFTAVPLSDPPPPPSETEDSDRDVSSDSSMR). Residues 553–562 (RDVSSDSSMR) are compositionally biased toward basic and acidic residues.

It belongs to the intermediate filament family. As to quaternary structure, forms a heterotetramer with XRCC4. The interaction with XRCC4 is direct, involves LIG4-free XRCC4 and leads to relocalization of IFFO1 at the double-strand break (DSB) sites. Interacts with LMNA; the interaction forms an interior nucleoskeleton and the recruitment to DNA double-strand breaks.

The protein resides in the nucleus. The protein localises to the nucleoplasm. It is found in the nucleus inner membrane. It localises to the nucleus matrix. Nuclear matrix protein involved in the immobilization of broken DNA ends and the suppression of chromosome translocation during DNA double-strand breaks (DSBs). Interacts with the nuclear lamina component LMNA, resulting in the formation of a nucleoskeleton that will relocalize to the DSB sites in a XRCC4-dependent manner and promote the immobilization of the broken ends, thereby preventing chromosome translocation. Acts as a scaffold that allows the DNA repair protein XRCC4 and LMNA to assemble into a complex at the DSB sites. This is Non-homologous end joining factor IFFO1 from Mus musculus (Mouse).